Here is a 245-residue protein sequence, read N- to C-terminus: tRNA1(Val) (adenine(37)-N6)-methyltransferase (245 aa).

Belongs to the methyltransferase superfamily. tRNA (adenine-N(6)-)-methyltransferase family.

The protein localises to the cytoplasm. The enzyme catalyses adenosine(37) in tRNA1(Val) + S-adenosyl-L-methionine = N(6)-methyladenosine(37) in tRNA1(Val) + S-adenosyl-L-homocysteine + H(+). In terms of biological role, specifically methylates the adenine in position 37 of tRNA(1)(Val) (anticodon cmo5UAC). The sequence is that of tRNA1(Val) (adenine(37)-N6)-methyltransferase from Cronobacter sakazakii (strain ATCC BAA-894) (Enterobacter sakazakii).